Consider the following 517-residue polypeptide: Sphingolipid C9-methyltransferase A (517 aa).

The next 2 helical transmembrane spans lie at 58–78 (LLILLLVVIPWYTARQIGGGL) and 80–100 (TTIFFAIFTTIPILMAFWSIA). S-adenosyl-L-methionine is bound by residues 223–224 (YT), 286–291 (TLGRNQ), and 316–317 (YR). Asn-290 carries an N-linked (GlcNAc...) asparagine glycan. The N-linked (GlcNAc...) asparagine glycan is linked to Asn-478.

The protein belongs to the CFA/CMAS family.

It is found in the membrane. The enzyme catalyses a (4E,8E)-4-sphinga-4,8-dienine ceramide + S-adenosyl-L-methionine = a 9-methyl-(4E,8E)-sphinga-4,8-dienine ceramide + S-adenosyl-L-homocysteine + H(+). It participates in lipid metabolism; sphingolipid metabolism. Its function is as follows. Catalyzes methylation of the sphingoid base component of glucosylceramides (GluCers) at the C9-position. Sphingolipid C9-methylation requires 4,8-desaturated ceramides as substrates. Glucosylceramides play important roles in growth, differentiation and pathogenicity. The methyl group at the C9-position distinguishes fungal glucosylceramides from those of plants and animals and may thus play a role in host-pathogen interactions enabling the host to recognize the fungal attack and initiate specific defense responses. This Emericella nidulans (strain FGSC A4 / ATCC 38163 / CBS 112.46 / NRRL 194 / M139) (Aspergillus nidulans) protein is Sphingolipid C9-methyltransferase A.